A 540-amino-acid chain; its full sequence is Chaperonin GroEL 2 (540 aa).

ATP contacts are provided by residues Thr-30–Pro-33, Lys-51, Asp-87–Thr-91, Gly-415, Asn-480–Leu-482, and Asp-496.

This sequence belongs to the chaperonin (HSP60) family. Forms a cylinder of 14 subunits composed of two heptameric rings stacked back-to-back. Interacts with the co-chaperonin GroES.

It is found in the cytoplasm. The catalysed reaction is ATP + H2O + a folded polypeptide = ADP + phosphate + an unfolded polypeptide.. Functionally, together with its co-chaperonin GroES, plays an essential role in assisting protein folding. The GroEL-GroES system forms a nano-cage that allows encapsulation of the non-native substrate proteins and provides a physical environment optimized to promote and accelerate protein folding. The sequence is that of Chaperonin GroEL 2 from Protochlamydia amoebophila (strain UWE25).